The sequence spans 61 residues: Conotoxin Cal14.6 (61 aa).

An N-terminal signal peptide occupies residues 1-21 (MKFLLFLSVALLLTSFIETEA). The propeptide occupies 22–38 (GPVNEAGVERLFRALVG). Proline 57 carries the 4-hydroxyproline; partial modification. A Proline amide modification is found at proline 60.

Contains 2 disulfide bonds. Expressed by the venom duct.

It localises to the secreted. Functionally, probable neurotoxin with unknown target. Possibly targets ion channels. The sequence is that of Conotoxin Cal14.6 from Californiconus californicus (California cone).